Here is a 200-residue protein sequence, read N- to C-terminus: LHFPL tetraspan subfamily member 6 protein (200 aa).

The N-terminal stretch at 1-21 is a signal peptide; that stretch reads MASSLTCAGVIWALLSFLCAA. 2 consecutive transmembrane segments (helical) span residues 84–104 and 123–143; these read ICTV…LTAI and GIQF…PLGW. Residue N154 is glycosylated (N-linked (GlcNAc...) asparagine). A helical transmembrane segment spans residues 172–192; it reads CTGAGAAAAMVLCTWMACFAG.

This sequence belongs to the LHFP family.

It is found in the membrane. The protein is LHFPL tetraspan subfamily member 6 protein of Danio rerio (Zebrafish).